An 88-amino-acid polypeptide reads, in one-letter code: Small ribosomal subunit protein bS16 (88 aa).

Belongs to the bacterial ribosomal protein bS16 family.

In Anaeromyxobacter dehalogenans (strain 2CP-1 / ATCC BAA-258), this protein is Small ribosomal subunit protein bS16.